Here is a 130-residue protein sequence, read N- to C-terminus: UPF0251 protein MmarC7_1642 (130 aa).

The protein belongs to the UPF0251 family.

The polypeptide is UPF0251 protein MmarC7_1642 (Methanococcus maripaludis (strain C7 / ATCC BAA-1331)).